The chain runs to 90 residues: Small ribosomal subunit protein uS15 (90 aa).

This sequence belongs to the universal ribosomal protein uS15 family. In terms of assembly, part of the 30S ribosomal subunit. Forms a bridge to the 50S subunit in the 70S ribosome, contacting the 23S rRNA.

In terms of biological role, one of the primary rRNA binding proteins, it binds directly to 16S rRNA where it helps nucleate assembly of the platform of the 30S subunit by binding and bridging several RNA helices of the 16S rRNA. Functionally, forms an intersubunit bridge (bridge B4) with the 23S rRNA of the 50S subunit in the ribosome. The polypeptide is Small ribosomal subunit protein uS15 (Helicobacter pylori (strain Shi470)).